A 523-amino-acid polypeptide reads, in one-letter code: Cytochrome P450 52-N1 (523 aa).

Residues 5–25 (AVLGAFAAFLLYMDVLYPFVI) form a helical membrane-spanning segment. Position 469 (Cys469) interacts with heme.

It belongs to the cytochrome P450 family. Heme serves as cofactor.

Its subcellular location is the membrane. It carries out the reaction an omega-methyl-long-chain fatty acid + reduced [NADPH--hemoprotein reductase] + O2 = an omega-hydroxy-long-chain fatty acid + oxidized [NADPH--hemoprotein reductase] + H2O + H(+). The catalysed reaction is (9Z,12Z)-octadecadienoate + reduced [NADPH--hemoprotein reductase] + O2 = 18-hydroxy-(9Z,12Z)-octadecadienoate + oxidized [NADPH--hemoprotein reductase] + H2O + H(+). The enzyme catalyses (9Z)-octadecenoate + reduced [NADPH--hemoprotein reductase] + O2 = 18-hydroxy-(9Z)-octadecenoate + oxidized [NADPH--hemoprotein reductase] + H2O + H(+). It catalyses the reaction hexadecanoate + reduced [NADPH--hemoprotein reductase] + O2 = 16-hydroxyhexadecanoate + oxidized [NADPH--hemoprotein reductase] + H2O + H(+). It carries out the reaction (9Z)-hexadecenoate + reduced [NADPH--hemoprotein reductase] + O2 = (9Z)-16-hydroxyhexadec-9-enoate + oxidized [NADPH--hemoprotein reductase] + H2O + H(+). The catalysed reaction is octadecanoate + reduced [NADPH--hemoprotein reductase] + O2 = 18-hydroxyoctadecanoate + oxidized [NADPH--hemoprotein reductase] + H2O + H(+). Catalyzes the terminal (at the omega-position) hydroxylation of a fatty acid. Probably involved in alkane metabolism. Linoleic acid is the preferred substrate, but it acts on various other C-16, C-18 and C-20 saturated and unsaturated fatty acids, namely palmitic, palmitoleic, stearic, oleic, alpha-linoleic, arachidonic and myristic acid. In Starmerella bombicola (Yeast), this protein is Cytochrome P450 52-N1.